The primary structure comprises 215 residues: Cytochrome b6 (215 aa).

The helical transmembrane segment at Ile-32–Phe-52 threads the bilayer. Cys-35 contributes to the heme c binding site. Heme b contacts are provided by His-86 and His-100. The next 3 membrane-spanning stretches (helical) occupy residues Ala-90 to Phe-110, Leu-116 to Tyr-136, and Leu-186 to Ile-206. Heme b contacts are provided by His-187 and His-202.

Belongs to the cytochrome b family. PetB subfamily. In terms of assembly, the 4 large subunits of the cytochrome b6-f complex are cytochrome b6, subunit IV (17 kDa polypeptide, PetD), cytochrome f and the Rieske protein, while the 4 small subunits are PetG, PetL, PetM and PetN. The complex functions as a dimer. Heme b is required as a cofactor. It depends on heme c as a cofactor.

Its subcellular location is the plastid. The protein localises to the chloroplast thylakoid membrane. Its function is as follows. Component of the cytochrome b6-f complex, which mediates electron transfer between photosystem II (PSII) and photosystem I (PSI), cyclic electron flow around PSI, and state transitions. This Physcomitrium patens (Spreading-leaved earth moss) protein is Cytochrome b6.